The following is a 175-amino-acid chain: NADH-quinone oxidoreductase subunit I 1 (175 aa).

2 4Fe-4S ferredoxin-type domains span residues 44-74 and 90-119; these read LNRWPDGLEKCIGCELCAWACPADAIFVESA and RVYQINYLRCIGCGFCIEACPTRALTMIND. Residues C54, C57, C60, C64, C99, C102, C105, and C109 each contribute to the [4Fe-4S] cluster site.

It belongs to the complex I 23 kDa subunit family. NDH-1 is composed of 14 different subunits. Subunits NuoA, H, J, K, L, M, N constitute the membrane sector of the complex. It depends on [4Fe-4S] cluster as a cofactor.

The protein localises to the cell membrane. The catalysed reaction is a quinone + NADH + 5 H(+)(in) = a quinol + NAD(+) + 4 H(+)(out). In terms of biological role, NDH-1 shuttles electrons from NADH, via FMN and iron-sulfur (Fe-S) centers, to quinones in the respiratory chain. The immediate electron acceptor for the enzyme in this species is believed to be menaquinone. Couples the redox reaction to proton translocation (for every two electrons transferred, four hydrogen ions are translocated across the cytoplasmic membrane), and thus conserves the redox energy in a proton gradient. The sequence is that of NADH-quinone oxidoreductase subunit I 1 from Mycolicibacterium paratuberculosis (strain ATCC BAA-968 / K-10) (Mycobacterium paratuberculosis).